The chain runs to 279 residues: MTVHATPEPAAHQGVALGSSFYAAMRILPRPQREAMFQVYSFCRFVDDIADSDRPREQRVAELQQWRDDIAALYRGAPPPRLADYQESLRTFGLKREDFEAIIDGMEMDVDADIRAPDEATLDLYCDRVASAVGRLSVRIFGLPEADGIELSHHLGRALQLTNILRDIDEDAGIGRLYLPSELLHKVGITATDPRVVAADSALPSVCAPLVERALAHFAAADKVMNRNPRRVVKAPRIMGKYYYSILQLLIARGFAAPRAPVKLGKASKIAILLQYAIV.

It belongs to the phytoene/squalene synthase family. HpnD subfamily.

The enzyme catalyses 2 (2E,6E)-farnesyl diphosphate = presqualene diphosphate + diphosphate. Its pathway is secondary metabolite biosynthesis; hopanoid biosynthesis. Involved in the biosynthesis of the hopanoid precursor squalene (SQ) from farnesyl diphosphate (FPP). Catalyzes the first step, the formation of presqualene diphosphate (PSPP) from two molecules of FPP. This is Presqualene diphosphate synthase from Rhodopseudomonas palustris (strain ATCC BAA-98 / CGA009).